We begin with the raw amino-acid sequence, 238 residues long: Probable RNA/DNA demethylase ALKBH6 (238 aa).

In terms of domain architecture, Fe2OG dioxygenase spans 96 to 227 (PANHVLVNQY…RVSLTIRRVP (132 aa)). Positions 103 and 105 each coordinate 2-oxoglutarate. 3 residues coordinate Fe cation: H114, D116, and H182. Positions 218 and 220 each coordinate 2-oxoglutarate.

It belongs to the alkB family. Interacts with VCPKMT. It depends on Fe(2+) as a cofactor.

The protein resides in the cytoplasm. The protein localises to the nucleus. Its function is as follows. Probable Fe(2+)/2-oxoglutarate-dependent dioxygenase involved in oxidative demethylation of nucleic acids. Binds nucleic acids with a preference for ssDNA or ssRNA to other types of DNAs. May play a role in nucleic acid damage repair. The protein is Probable RNA/DNA demethylase ALKBH6 (Alkbh6) of Mus musculus (Mouse).